The chain runs to 291 residues: MLQGSLVALITPMNQDGSIHYEQLRDLIDWHIENGTDGIVAVGTTGESATLSVEEHTAVIEAVVKHVAKRVPVIAGTGANNTVEAIALSQAAEKAGADYTLSVVPYYNKPSQEGMYRHFKAVAEAAAIPMILYNVPGRTVVSMTNDTILRLSEIPNIVGVKEASGNVGSNIELINRAPEGFVVLSGDDHTALPFMLCGGHGVITVAANAAPKLFADMCRAALQGDIALARELNDRLIPIYDTMFCEPSPAAPKWAVSALGRCEPHVRLPLVPLTEGGQAKVRAALKASGQL.

Residue T45 participates in pyruvate binding. Catalysis depends on Y133, which acts as the Proton donor/acceptor. K161 serves as the catalytic Schiff-base intermediate with substrate. I203 is a pyruvate binding site.

It belongs to the DapA family. Homotetramer; dimer of dimers.

It localises to the cytoplasm. The catalysed reaction is L-aspartate 4-semialdehyde + pyruvate = (2S,4S)-4-hydroxy-2,3,4,5-tetrahydrodipicolinate + H2O + H(+). Its pathway is amino-acid biosynthesis; L-lysine biosynthesis via DAP pathway; (S)-tetrahydrodipicolinate from L-aspartate: step 3/4. Its function is as follows. Catalyzes the condensation of (S)-aspartate-beta-semialdehyde [(S)-ASA] and pyruvate to 4-hydroxy-tetrahydrodipicolinate (HTPA). This Neisseria meningitidis serogroup C / serotype 2a (strain ATCC 700532 / DSM 15464 / FAM18) protein is 4-hydroxy-tetrahydrodipicolinate synthase.